The primary structure comprises 892 residues: Protein BNI4 (892 aa).

2 positions are modified to phosphoserine: S43 and S133. Disordered regions lie at residues 185–287 (DFLS…EDTS) and 305–387 (KPVI…QDTE). Residues 208–223 (TILERDNNLPVKREEN) are compositionally biased toward basic and acidic residues. Polar residues-rich tracts occupy residues 224–236 (TIINSETESTTHS) and 270–280 (DSSAQRTTSAG). A Phosphoserine modification is found at S281. Positions 309–335 (GNNSVTNEKNKMSSSSTFSMNIQTSLK) are enriched in polar residues. The span at 346–356 (SSSSIFNSFLK) shows a compositional bias: low complexity. Basic and acidic residues predominate over residues 357 to 371 (GKIETSDSPRKEPMR). S364 and S394 each carry phosphoserine. Residue T410 is modified to Phosphothreonine. Phosphoserine is present on residues S476, S500, and S503. 3 disordered regions span residues 506-526 (RTRSTKSNKRSSMNSQRRSLT), 618-644 (SDEEKTEVERDVPKPREEPLKKDSERQ), and 685-734 (YATE…GDER). Position 618 is a phosphoserine (S618). Residues 624–643 (EVERDVPKPREEPLKKDSER) are compositionally biased toward basic and acidic residues. T703 carries the phosphothreonine modification. Residues 707–719 (RNNKEDSYKERET) are compositionally biased toward basic and acidic residues. A phosphoserine mark is found at S746 and S825.

May interact with CHS3 and seems to be an adapter (along with SKT5) to link CHS3 to septins.

In Saccharomyces cerevisiae (strain ATCC 204508 / S288c) (Baker's yeast), this protein is Protein BNI4 (BNI4).